The following is a 127-amino-acid chain: Major sperm protein 63 (127 aa).

Ala-2 is modified (N-acetylalanine). The MSP domain occupies 9–126 (DIQTQPGTKI…RRKNLPIEYN (118 aa)).

In terms of tissue distribution, sperm.

The protein localises to the cell projection. The protein resides in the pseudopodium. It is found in the cytoplasm. It localises to the cytoskeleton. Functionally, central component in molecular interactions underlying sperm crawling. Forms an extensive filament system that extends from sperm villipoda, along the leading edge of the pseudopod. This is Major sperm protein 63 (msp-63) from Caenorhabditis elegans.